We begin with the raw amino-acid sequence, 352 residues long: Molybdenum import ATP-binding protein ModC (352 aa).

Residues 1-229 form the ABC transporter domain; that stretch reads MLELNFSQTL…SVMHPWLPKE (229 aa). Residue 31–38 coordinates ATP; it reads GVSGAGKT. The region spanning 289–352 is the Mop domain; sequence QTSIRNVLRA…AQVKSVSITA (64 aa).

This sequence belongs to the ABC transporter superfamily. Molybdate importer (TC 3.A.1.8) family. As to quaternary structure, the complex is composed of two ATP-binding proteins (ModC), two transmembrane proteins (ModB) and a solute-binding protein (ModA).

The protein resides in the cell inner membrane. The enzyme catalyses molybdate(out) + ATP + H2O = molybdate(in) + ADP + phosphate + H(+). Functionally, part of the ABC transporter complex ModABC involved in molybdenum import. Responsible for energy coupling to the transport system. This chain is Molybdenum import ATP-binding protein ModC, found in Salmonella typhi.